A 194-amino-acid chain; its full sequence is Histone H1 (194 aa).

Position 1 is an N-acetylalanine; partial (alanine 1). A compositionally biased stretch (low complexity) spans 1–14 (AEVAPAPAAAAPAK). Disordered stretches follow at residues 1–31 (AEVAPAPAAAAPAKAPKKKAAAKPKKSGPAV) and 105–194 (AKKP…AAKK). A compositionally biased stretch (basic residues) spans 15–26 (APKKKAAAKPKK). Positions 27 to 100 (SGPAVGELAG…GASGSFKLNK (74 aa)) constitute an H15 domain. The segment covering 116–194 (KAKKVAAKKP…KVKKPAAAKK (79 aa)) has biased composition (basic residues). Phosphoserine occurs at positions 145, 161, and 182.

This sequence belongs to the histone H1/H5 family.

Its subcellular location is the nucleus. It is found in the chromosome. In terms of biological role, histones H1 are necessary for the condensation of nucleosome chains into higher-order structures. This is Histone H1 from Salmo trutta (Brown trout).